A 137-amino-acid polypeptide reads, in one-letter code: Small ribosomal subunit protein uS12 (137 aa).

Residues 1–57 are disordered; the sequence is MPTINQLVRKPRKSKVEKSKSPALNVGYNSLKRVPTNESAPQKRGVATRVGTMTPKK. Asp102 bears the 3-methylthioaspartic acid mark.

This sequence belongs to the universal ribosomal protein uS12 family. In terms of assembly, part of the 30S ribosomal subunit. Contacts proteins S8 and S17. May interact with IF1 in the 30S initiation complex.

Its function is as follows. With S4 and S5 plays an important role in translational accuracy. Interacts with and stabilizes bases of the 16S rRNA that are involved in tRNA selection in the A site and with the mRNA backbone. Located at the interface of the 30S and 50S subunits, it traverses the body of the 30S subunit contacting proteins on the other side and probably holding the rRNA structure together. The combined cluster of proteins S8, S12 and S17 appears to hold together the shoulder and platform of the 30S subunit. The sequence is that of Small ribosomal subunit protein uS12 from Streptococcus gordonii (strain Challis / ATCC 35105 / BCRC 15272 / CH1 / DL1 / V288).